The primary structure comprises 286 residues: Polyamine aminopropyltransferase (286 aa).

The PABS domain maps to Asp-3–Lys-240. S-methyl-5'-thioadenosine is bound at residue Gln-32. Spermidine-binding residues include His-63 and Asp-87. S-methyl-5'-thioadenosine is bound by residues Glu-107 and Asp-139 to Gly-140. The active-site Proton acceptor is the Asp-158. Position 158–161 (Asp-158–Asp-161) interacts with spermidine. Pro-165 lines the S-methyl-5'-thioadenosine pocket.

The protein belongs to the spermidine/spermine synthase family. In terms of assembly, homodimer or homotetramer.

It localises to the cytoplasm. It catalyses the reaction S-adenosyl 3-(methylsulfanyl)propylamine + putrescine = S-methyl-5'-thioadenosine + spermidine + H(+). It functions in the pathway amine and polyamine biosynthesis; spermidine biosynthesis; spermidine from putrescine: step 1/1. Functionally, catalyzes the irreversible transfer of a propylamine group from the amino donor S-adenosylmethioninamine (decarboxy-AdoMet) to putrescine (1,4-diaminobutane) to yield spermidine. The protein is Polyamine aminopropyltransferase of Clostridium acetobutylicum (strain ATCC 824 / DSM 792 / JCM 1419 / IAM 19013 / LMG 5710 / NBRC 13948 / NRRL B-527 / VKM B-1787 / 2291 / W).